The primary structure comprises 627 residues: Protein zyg-11 homolog A (627 aa).

LRR repeat units lie at residues 123 to 146 (LPNL…LSCK), 203 to 227 (LPNL…SFLQ), and 409 to 432 (ITSI…LIMA).

The protein belongs to the zyg-11 family.

In terms of biological role, probably acts as a target recruitment subunit in an E3 ubiquitin ligase complex ZYGA-CUL2-elongin BC. This Mus musculus (Mouse) protein is Protein zyg-11 homolog A (Zyg11a).